A 665-amino-acid polypeptide reads, in one-letter code: Intraflagellar transport protein 70A (665 aa).

TPR repeat units follow at residues 11 to 44 (DGEF…SPRS), 45 to 78 (RAGL…HPEL), 154 to 187 (TDGQ…SGYQ), 189 to 221 (DLSY…GIRQ), 393 to 424 (LTKQ…EKYI), 425 to 457 (PVLM…CNDH), and 459 to 492 (VWKL…HYDN). Residues 508 to 535 (YIMTSQNEEAEELMRKIEKEEEQLSYDD) are a coiled coil. One copy of the TPR 8 repeat lies at 544 to 577 (CIVNLVIGTLYCAKGNYEFGISRVIKSLEPYNKK).

Belongs to the TTC30/dfy-1/fleer family.

The protein localises to the cell projection. It is found in the cilium. Required for polyglutamylation of axonemal tubulin. Plays a role in anterograde intraflagellar transport (IFT), the process by which cilia precursors are transported from the base of the cilium to the site of their incorporation at the tip. The sequence is that of Intraflagellar transport protein 70A from Homo sapiens (Human).